We begin with the raw amino-acid sequence, 208 residues long: Methyl-CpG-binding domain protein 3-like 4 (208 aa).

This sequence belongs to the MBD3L family.

This chain is Methyl-CpG-binding domain protein 3-like 4 (MBD3L4), found in Homo sapiens (Human).